We begin with the raw amino-acid sequence, 267 residues long: Tryptophan synthase alpha chain (267 aa).

Catalysis depends on proton acceptor residues Glu-47 and Asp-58.

The protein belongs to the TrpA family. In terms of assembly, tetramer of two alpha and two beta chains.

It carries out the reaction (1S,2R)-1-C-(indol-3-yl)glycerol 3-phosphate + L-serine = D-glyceraldehyde 3-phosphate + L-tryptophan + H2O. It participates in amino-acid biosynthesis; L-tryptophan biosynthesis; L-tryptophan from chorismate: step 5/5. Functionally, the alpha subunit is responsible for the aldol cleavage of indoleglycerol phosphate to indole and glyceraldehyde 3-phosphate. This is Tryptophan synthase alpha chain from Prosthecochloris aestuarii (strain DSM 271 / SK 413).